The sequence spans 370 residues: 3-dehydroquinate synthase (370 aa).

NAD(+)-binding positions include 108–112 (GVIGD), 132–133 (TT), K145, and K154. Residues E187, H249, and H267 each coordinate Zn(2+).

Belongs to the sugar phosphate cyclases superfamily. Dehydroquinate synthase family. The cofactor is Co(2+). Requires Zn(2+) as cofactor. It depends on NAD(+) as a cofactor.

The protein resides in the cytoplasm. It carries out the reaction 7-phospho-2-dehydro-3-deoxy-D-arabino-heptonate = 3-dehydroquinate + phosphate. It functions in the pathway metabolic intermediate biosynthesis; chorismate biosynthesis; chorismate from D-erythrose 4-phosphate and phosphoenolpyruvate: step 2/7. In terms of biological role, catalyzes the conversion of 3-deoxy-D-arabino-heptulosonate 7-phosphate (DAHP) to dehydroquinate (DHQ). The protein is 3-dehydroquinate synthase of Cereibacter sphaeroides (strain ATCC 17029 / ATH 2.4.9) (Rhodobacter sphaeroides).